The primary structure comprises 369 residues: Dihydroorotate dehydrogenase (quinone) (369 aa).

FMN-binding positions include 76–80 (AGLDK) and Thr-100. Lys-80 is a substrate binding site. Position 125 to 129 (125 to 129 (NRMGF)) interacts with substrate. FMN contacts are provided by Asn-154 and Asn-187. Asn-187 provides a ligand contact to substrate. Ser-190 functions as the Nucleophile in the catalytic mechanism. Residue Asn-192 coordinates substrate. Residues Lys-232 and Ser-260 each contribute to the FMN site. 261 to 262 (NT) provides a ligand contact to substrate. FMN-binding positions include Gly-282, Gly-311, and 332-333 (YS).

It belongs to the dihydroorotate dehydrogenase family. Type 2 subfamily. As to quaternary structure, monomer. It depends on FMN as a cofactor.

The protein resides in the cell membrane. The enzyme catalyses (S)-dihydroorotate + a quinone = orotate + a quinol. It functions in the pathway pyrimidine metabolism; UMP biosynthesis via de novo pathway; orotate from (S)-dihydroorotate (quinone route): step 1/1. Functionally, catalyzes the conversion of dihydroorotate to orotate with quinone as electron acceptor. This Deinococcus radiodurans (strain ATCC 13939 / DSM 20539 / JCM 16871 / CCUG 27074 / LMG 4051 / NBRC 15346 / NCIMB 9279 / VKM B-1422 / R1) protein is Dihydroorotate dehydrogenase (quinone) (pyrD).